The chain runs to 304 residues: Calcium release-activated calcium channel protein 1 (304 aa).

Pro residues predominate over residues 1–11; it reads MHPEPAPPPNN. The disordered stretch occupies residues 1 to 49; sequence MHPEPAPPPNNSNPELPLSGGSSTSGSRRSRRRSGDGEPTGAPPLPPPP. At 1 to 88 the chain is on the cytoplasmic side; it reads MHPEPAPPPN…KLYLSRAKLK (88 aa). The interval 3 to 49 is required for generation of inwardly rectifying CRAC currents; it reads PEPAPPPNNSNPELPLSGGSSTSGSRRSRRRSGDGEPTGAPPLPPPP. A compositionally biased stretch (low complexity) spans 12 to 27; sequence SNPELPLSGGSSTSGS. The AKAP5 association region stretch occupies residues 39 to 60; sequence PTGAPPLPPPPAVSYPDWIGQS. The tract at residues 71 to 91 is interaction with STIM1; it reads SMQALSWRKLYLSRAKLKASS. The helical transmembrane segment at 89–106 threads the bilayer; the sequence is ASSRTSALLSGFAMVAMV. Topologically, residues 107–120 are extracellular; sequence EVQLDTDHDYPPGL. A helical membrane pass occupies residues 121–141; the sequence is LIVFSACTTVLVAVHLFALMI. The Cytoplasmic portion of the chain corresponds to 142–174; the sequence is STCILPNIEAVSNVHNLNSVKESPHERMHRHIE. A helical transmembrane segment spans residues 175-195; it reads LAWAFSTVIGTLLFLAEVVLL. The Extracellular segment spans residues 196–237; the sequence is CWVKFLPLKRQAGQPSPTKPPTEPAVVVANSSNNGGITPGEA. The N-linked (GlcNAc...) asparagine glycan is linked to Asn-225. A helical transmembrane segment spans residues 238–258; that stretch reads AAIASTAIMVPCGLVFIVFAV. Over 259–304 the chain is Cytoplasmic; it reads HFYRSLVSHKTDRQFQELNELAEFARLQDQLDHRGDHSLTPGTHYA. An interaction with STIM1 region spans residues 275-295; sequence ELNELAEFARLQDQLDHRGDH. Thr-298 carries the post-translational modification Phosphothreonine.

The protein belongs to the Orai family. As to quaternary structure, oligomerizes in homomeric and heteromeric ORAI complexes. Native CRAC channels most likely consist of hexameric ORAI heteromers, implying that diverse ORAI1, ORAI2 and ORAI3 subunit combinations with distinct biophysical properties can operate in a cell-type specific way. ARC channels are heteropentamers consisting of three ORAI1 and two ORAI3 subunits. Interacts with STIM1 and STIM2; this regulates channel activity. Interacts with CALM; this may displace STIM1 and STIM2 and might thereby modulate channel activity. Interacts (via N-terminus) with AKAP5 upon store depletion. Interacts with CRACR2A/EFCAB4B; the interaction is direct and takes place in absence of Ca(2+). Forms a complex with CRACR2A/EFCAB4B and STIM1 at low concentration of Ca(2+), the complex dissociates at elevated Ca(2+) concentrations. Interacts with ASPH (isoform 8). Interacts with SLC35G1. Interacts with UBQLN1. Interacts with ADCY8; interaction is calcium store depletion independent; interaction occurs in membrane raft; interaction increases markedly after store depletion; positively regulates SOCE-induced adenylate cyclase activity; contributes to the targeting of ADCY8 to discrete regions of the plasma membrane that are shielded from other calcium events. Interacts with EFHB; the interaction takes place upon Ca(2+)-store depletion. Interacts (via N- and C-termini) with ATP2C2 (via N-terminus); this interaction regulates Ca(2+) influx at the plasma membrane. Interacts with TSPAN18; this interaction regulates ORAI1 exit from the endoplasmic (ER), and/or Golgi, and trafficking to the cell surface. In terms of processing, N-glycosylated. N-glycosylation inhibits channel activity in T cells. Post-translationally, ubiquitinated. Cys-195 is oxidated, leading to inactivation of channel activity.

It localises to the cell membrane. The protein resides in the basolateral cell membrane. It catalyses the reaction Ca(2+)(in) = Ca(2+)(out). Oxidation at Cys-196 leads to inactivation of channel activity. Its function is as follows. Pore-forming subunit of two major inward rectifying Ca(2+) channels at the plasma membrane: Ca(2+) release-activated Ca(2+) (CRAC) channels and arachidonate-regulated Ca(2+)-selective (ARC) channels. Assembles with ORAI2 and ORAI3 to form hexameric CRAC channels that mediate Ca(2+) influx upon depletion of endoplasmic reticulum Ca(2+) store and channel activation by Ca(2+) sensor STIM1, a process known as store-operated Ca(2+) entry (SOCE). Various pore subunit combinations may account for distinct CRAC channel spatiotemporal and cell-type specific dynamics. ORAI1 mainly contributes to the generation of Ca(2+) plateaus involved in sustained Ca(2+) entry and is dispensable for cytosolic Ca(2+) oscillations, whereas ORAI2 and ORAI3 generate oscillatory patterns. CRAC channels assemble in Ca(2+) signaling microdomains where Ca(2+) influx is coupled to calmodulin and calcineurin signaling and activation of NFAT transcription factors recruited to ORAI1 via AKAP5. Activates NFATC2/NFAT1 and NFATC3/NFAT4-mediated transcriptional responses. CRAC channels are the main pathway for Ca(2+) influx in T cells and promote the immune response to pathogens by activating NFAT-dependent cytokine and chemokine transcription. Assembles with ORAI3 to form channels that mediate store-independent Ca(2+) influx in response to inflammatory metabolites arachidonate or its derivative leukotriene C4, termed ARC and LRC channels respectively. Plays a prominent role in Ca(2+) influx at the basolateral membrane of mammary epithelial cells independently of the Ca(2+) content of endoplasmic reticulum or Golgi stores. May mediate transepithelial transport of large quantities of Ca(2+) for milk secretion. The sequence is that of Calcium release-activated calcium channel protein 1 (Orai1) from Rattus norvegicus (Rat).